Consider the following 881-residue polypeptide: DNA mismatch repair protein MutS (881 aa).

Residue 632 to 639 (GPNMGGKS) coordinates ATP.

This sequence belongs to the DNA mismatch repair MutS family.

Functionally, this protein is involved in the repair of mismatches in DNA. It is possible that it carries out the mismatch recognition step. This protein has a weak ATPase activity. The chain is DNA mismatch repair protein MutS from Acinetobacter baylyi (strain ATCC 33305 / BD413 / ADP1).